The primary structure comprises 202 residues: Matrix protein (202 aa).

Positions 14–33 (EDTQKPSPASAPPDGDDLWL) are disordered. The PPXY motif signature appears at 35-38 (PPEY). Residues 115 to 151 (KLRRTLIFQWADSRGPLEGEELEHSQEITWDDDTEFV) form an essential for glycoprotein binding region.

Belongs to the lyssavirus matrix protein family. Homomultimer. Interacts with nucleoprotein and with the cytoplasmic domain of glycoprotein. Interacts with host ATP6V1A; this interaction plays an important role in virion uncoating after viral entry.

The protein resides in the virion membrane. The protein localises to the host endomembrane system. Its subcellular location is the host cytoplasm. Plays a major role in assembly, budding and uncoating of virion after membrane fusion. Completely covers the ribonucleoprotein coil and keep it in condensed bullet-shaped form. Inhibits viral transcription and stimulates replication. Plays a major role in early induction of TRAIL-mediated apoptosis in infected neurons. Inhibits the integrated stress response (ISR) in the infected cell by blocking the formation of stress granules. The sequence is that of Matrix protein (M) from Rabies virus (strain HEP-Flury) (RABV).